Consider the following 199-residue polypeptide: Rho-related protein racG (199 aa).

GTP is bound by residues Ala13, Gly15, Lys16, Thr17, Cys18, Tyr32, and Thr35. Thr17 is a binding site for Mg(2+). 2 short sequence motifs (switch) span residues 26 to 37 (NAFPNEYIPTVF) and 57 to 75 (DTAG…YPST). Residue Thr35 participates in Mg(2+) binding. The GTP site is built by Lys116, Asp118, and Ala159. Cys196 is modified (cysteine methyl ester). A lipid anchor (S-geranylgeranyl cysteine) is attached at Cys196. Residues 197–199 (SLF) constitute a propeptide, removed in mature form.

The protein belongs to the small GTPase superfamily. Rho family. Mg(2+) serves as cofactor.

The protein localises to the cell membrane. It is found in the cytoplasm. The protein resides in the cytoskeleton. The catalysed reaction is GTP + H2O = GDP + phosphate + H(+). Its activity is regulated as follows. Regulated by guanine nucleotide exchange factors (GEFs) which promote the exchange of bound GDP for free GTP, GTPase activating proteins (GAPs) which increase the GTP hydrolysis activity, and GDP dissociation inhibitors which inhibit the dissociation of the nucleotide from the GTPase. Small GTPase which cycles between active GTP-bound and inactive GDP-bound states. Involved in actin cytoskeleton remodeling during capping of surface receptors and uroid formation. This is Rho-related protein racG from Entamoeba histolytica (strain ATCC 30459 / HM-1:IMSS / ABRM).